The following is a 152-amino-acid chain: MGLSTLEQKLTEMLSAPVEALGFELVGIEFIRARQSTLRIYIDSENGINVDDCADVSHQVSAVLDVEEPITVAYNLEVSSPGLDRPMFTAEHYTRFLGDEVSLVLRMAVQNRRKWQGIIKSVDGEMITVAVEGKDEVFALSNIQKANLVPHF.

The protein belongs to the RimP family.

It is found in the cytoplasm. Required for maturation of 30S ribosomal subunits. This is Ribosome maturation factor RimP from Serratia proteamaculans (strain 568).